Here is a 157-residue protein sequence, read N- to C-terminus: Protein-export protein SecB (157 aa).

This sequence belongs to the SecB family. As to quaternary structure, homotetramer, a dimer of dimers. One homotetramer interacts with 1 SecA dimer.

Its subcellular location is the cytoplasm. Its function is as follows. One of the proteins required for the normal export of preproteins out of the cell cytoplasm. It is a molecular chaperone that binds to a subset of precursor proteins, maintaining them in a translocation-competent state. It also specifically binds to its receptor SecA. The protein is Protein-export protein SecB of Rhodopseudomonas palustris (strain TIE-1).